Here is a 223-residue protein sequence, read N- to C-terminus: Probable glutathione S-transferase (223 aa).

In terms of domain architecture, GST N-terminal spans 2–81; that stretch reads AEVKLLGFWY…YIDETFEGPS (80 aa). Glutathione is bound by residues Ser12, Lys39, Val53, and 65-66; that span reads ES. The GST C-terminal domain maps to 86–212; sequence DPYDRALARF…ELLAFFRARF (127 aa).

It belongs to the GST superfamily. HSP26 family. As to expression, root tip-specific expression.

The catalysed reaction is RX + glutathione = an S-substituted glutathione + a halide anion + H(+). The protein is Probable glutathione S-transferase of Nicotiana tabacum (Common tobacco).